The primary structure comprises 145 residues: D-aminoacyl-tRNA deacylase (145 aa).

Positions 137 to 138 (GP) match the Gly-cisPro motif, important for rejection of L-amino acids motif.

The protein belongs to the DTD family. As to quaternary structure, homodimer.

The protein localises to the cytoplasm. The enzyme catalyses glycyl-tRNA(Ala) + H2O = tRNA(Ala) + glycine + H(+). It carries out the reaction a D-aminoacyl-tRNA + H2O = a tRNA + a D-alpha-amino acid + H(+). Functionally, an aminoacyl-tRNA editing enzyme that deacylates mischarged D-aminoacyl-tRNAs. Also deacylates mischarged glycyl-tRNA(Ala), protecting cells against glycine mischarging by AlaRS. Acts via tRNA-based rather than protein-based catalysis; rejects L-amino acids rather than detecting D-amino acids in the active site. By recycling D-aminoacyl-tRNA to D-amino acids and free tRNA molecules, this enzyme counteracts the toxicity associated with the formation of D-aminoacyl-tRNA entities in vivo and helps enforce protein L-homochirality. This Streptomyces avermitilis (strain ATCC 31267 / DSM 46492 / JCM 5070 / NBRC 14893 / NCIMB 12804 / NRRL 8165 / MA-4680) protein is D-aminoacyl-tRNA deacylase.